A 1140-amino-acid polypeptide reads, in one-letter code: Rho GTPase-activating protein gacF (1140 aa).

Disordered regions lie at residues 1-145 (MKTH…KPSR), 189-236 (ESDI…IEPI), 455-504 (INNN…STSF), 520-644 (EVQQ…GLES), 661-700 (ESSKLPKKSSLNRQMTIVNSNNIGNGDEKNSDCTTSDEDE), 720-759 (ETNDDNNNNDQINNSNSSNNIPKTTITTTTNNTTTTNNIS), 773-927 (AKVT…STLS), and 952-1095 (TSSP…NHTN). 2 stretches are compositionally biased toward low complexity: residues 10–26 (LGGLFSHSSSSPNLKSF) and 35–71 (QQQQQQQHNNNNNNNNNHQRQPSTTSTSSYIDSASSS). Residues 28–55 (TEEVIHEQQQQQQQHNNNNNNNNNHQRQ) are a coiled coil. Positions 72-82 (IEETSGYLSKT) are enriched in polar residues. Composition is skewed to low complexity over residues 83–136 (SSSS…TSSP) and 193–222 (DNGSSGGTTSSTGNIISHSKSPSSSSSSSS). Residues 234–409 (EPISQSTEDY…RLIENYHSIF (176 aa)) enclose the Rho-GAP domain. 2 stretches are compositionally biased toward low complexity: residues 456-475 (NNNSNSSNNNNSSSSSSPYK) and 482-493 (PKSSPKLNNRNS). Over residues 494–504 (ISPKLSSSTSF) the composition is skewed to polar residues. Residues 517–548 (ISDEVQQEQQNQQQQQDEQQDEQQDEQQDEQQ) adopt a coiled-coil conformation. Over residues 520–533 (EVQQEQQNQQQQQD) the composition is skewed to low complexity. The span at 534–549 (EQQDEQQDEQQDEQQD) shows a compositional bias: acidic residues. The segment covering 550 to 566 (EQNSNSTSINTSSSSIT) has biased composition (low complexity). Residues 572–596 (STVQYLNRINTCRRPSSWTNNNRIK) show a composition bias toward polar residues. The segment covering 597 to 606 (QQQHHHHHHQ) has biased composition (basic residues). A compositionally biased stretch (low complexity) spans 607 to 631 (QQQQHQQHQQQQSSSSESNSSLTSS). Polar residues-rich tracts occupy residues 632 to 641 (PQKRLNSVNG) and 672 to 684 (NRQMTIVNSNNIG). A compositionally biased stretch (low complexity) spans 724 to 759 (DNNNNDQINNSNSSNNIPKTTITTTTNNTTTTNNIS). A compositionally biased stretch (polar residues) spans 773 to 796 (AKVTPTPTPAPMQTSSFLSTKQTN). The segment covering 797 to 822 (SPSSSSSPSSTVSSTSSSPSSSLSSS) has biased composition (low complexity). Positions 823–854 (IDNKTMSNVNYNRFQPANRTVSSPNVRNFSVP) are enriched in polar residues. Composition is skewed to low complexity over residues 891–914 (KPKNTTSSLSSSSSNISKSTNSTP), 952–1058 (TSSP…TSST), and 1065–1079 (HSNSLSQTPSSSSSS).

The protein resides in the cytoplasm. Functionally, rho GTPase-activating protein involved in the signal transduction pathway. The sequence is that of Rho GTPase-activating protein gacF (gacF) from Dictyostelium discoideum (Social amoeba).